Here is a 131-residue protein sequence, read N- to C-terminus: Small ribosomal subunit protein uS8 (131 aa).

This sequence belongs to the universal ribosomal protein uS8 family. Part of the 30S ribosomal subunit. Contacts proteins S5 and S12.

In terms of biological role, one of the primary rRNA binding proteins, it binds directly to 16S rRNA central domain where it helps coordinate assembly of the platform of the 30S subunit. The chain is Small ribosomal subunit protein uS8 from Verminephrobacter eiseniae (strain EF01-2).